Here is a 1254-residue protein sequence, read N- to C-terminus: Receptor tyrosine-protein kinase erbB-2 (1254 aa).

Residues 1 to 22 (MELAAWCGWGLLLALLSPGASG) form the signal peptide. At 23–652 (TQVCTGTDMK…PAEQRASPAT (630 aa)) the chain is on the extracellular side. The cysteines at positions 26 and 53 are disulfide-linked. 3 N-linked (GlcNAc...) asparagine glycosylation sites follow: Asn-68, Asn-125, and Asn-187. Disulfide bonds link Cys-162–Cys-192, Cys-195–Cys-204, Cys-199–Cys-212, Cys-236–Cys-244, Cys-240–Cys-252, Cys-255–Cys-264, Cys-268–Cys-295, Cys-299–Cys-311, Cys-315–Cys-331, Cys-334–Cys-338, Cys-342–Cys-367, Cys-475–Cys-504, Cys-511–Cys-520, and Cys-515–Cys-528. Asn-259 carries an N-linked (GlcNAc...) asparagine glycan. Asn-530 carries an N-linked (GlcNAc...) asparagine glycan. 8 cysteine pairs are disulfide-bonded: Cys-531–Cys-540, Cys-544–Cys-560, Cys-563–Cys-576, Cys-567–Cys-584, Cys-587–Cys-596, Cys-600–Cys-623, Cys-626–Cys-634, and Cys-630–Cys-642. Residue Asn-571 is glycosylated (N-linked (GlcNAc...) asparagine). Asn-629 is a glycosylation site (N-linked (GlcNAc...) asparagine). A helical membrane pass occupies residues 653–675 (SIIATVVGILLFLVIGVVVGILI). A required for interaction with KPNB1 and EEA1 region spans residues 676 to 689 (KRRRQKIRKYTMRR). The Nuclear localization signal signature appears at 676 to 689 (KRRRQKIRKYTMRR). At 676 to 1254 (KRRRQKIRKY…PEYLGLDVPV (579 aa)) the chain is on the cytoplasmic side. Residues 720–987 (LRKVKVLGSG…RMARDPQRFV (268 aa)) enclose the Protein kinase domain. ATP-binding positions include 726–734 (LGSGAFGTV) and Lys-753. The active-site Proton acceptor is Asp-845. Residue Tyr-877 is modified to Phosphotyrosine. Disordered stretches follow at residues 1029 to 1116 (GFFF…SEDP) and 1133 to 1179 (CSPQ…GKNG). Residues Ser-1054, Ser-1078, Ser-1083, and Ser-1107 each carry the phosphoserine modification. Tyr-1112 carries the post-translational modification Phosphotyrosine. A Phosphotyrosine; by autocatalysis modification is found at Tyr-1139. The span at 1146–1161 (RPQPPLTPEGPLPPVR) shows a compositional bias: pro residues. Thr-1166 carries the post-translational modification Phosphothreonine. The interaction with PIK3C2B stretch occupies residues 1195-1197 (EYL). Tyr-1196 carries the post-translational modification Phosphotyrosine. The interval 1223–1254 (DQDPSERGSPPNTFEGTPTAENPEYLGLDVPV) is disordered. Positions 1232 to 1242 (PPNTFEGTPTA) are enriched in polar residues. Tyr-1247 bears the Phosphotyrosine; by autocatalysis mark.

It belongs to the protein kinase superfamily. Tyr protein kinase family. EGF receptor subfamily. As to quaternary structure, homodimer. Heterodimer with EGFR, ERBB3 and ERBB4. Part of a complex with EGFR and either PIK3C2A or PIK3C2B. May interact with PIK3C2B when phosphorylated on Tyr-1196. Interacts with PRKCABP and PLXNB1. Interacts (when phosphorylated on Tyr-1247) with MEMO. Interacts with MUC1. Interacts (when phosphorylated on Tyr-1139) with GRB7 (via SH2 domain). Interacts (when phosphorylated on Tyr-1247) with ERBIN. Interacts with SRC, KPNB1, RANBP2, EEA1, CRM1, CLTC, PTK6, RPA194, MYOC and ACTB. Interacts (preferentially with the tyrosine phosphorylated form) with CPNE3; this interaction occurs at the cell membrane and is increased in a growth factor heregulin-dependent manner. Interacts with HSP90AA1 and HSP90AB1 in an ATP-dependent manner; the interaction suppresses ERBB2 kinase activity. Interacts with SORL1; this interaction regulates ERBB2 subcellular distribution by promoting its recycling after internalization from endosomes back to the plasma membrane, hence stimulates ERBB2-mediated signaling. Interacts with SH3BGRL. Interacts with ROR1. Post-translationally, autophosphorylated. Autophosphorylation occurs in trans, i.e. one subunit of the dimeric receptor phosphorylates tyrosine residues on the other subunit. Ligand-binding increases phosphorylation on tyrosine residues. Signaling via SEMA4C promotes phosphorylation at Tyr-1247. Dephosphorylated by PTPN12.

The protein localises to the cell membrane. The protein resides in the cell projection. It is found in the ruffle membrane. Its subcellular location is the early endosome. It localises to the cytoplasm. The protein localises to the perinuclear region. The protein resides in the nucleus. The enzyme catalyses L-tyrosyl-[protein] + ATP = O-phospho-L-tyrosyl-[protein] + ADP + H(+). Protein tyrosine kinase that is part of several cell surface receptor complexes, but that apparently needs a coreceptor for ligand binding. Essential component of a neuregulin-receptor complex, although neuregulins do not interact with it alone. GP30 is a potential ligand for this receptor. Regulates outgrowth and stabilization of peripheral microtubules (MTs). Upon ERBB2 activation, the MEMO1-RHOA-DIAPH1 signaling pathway elicits the phosphorylation and thus the inhibition of GSK3B at cell membrane. This prevents the phosphorylation of APC and CLASP2, allowing its association with the cell membrane. In turn, membrane-bound APC allows the localization of MACF1 to the cell membrane, which is required for microtubule capture and stabilization. Its function is as follows. In the nucleus is involved in transcriptional regulation. Associates with the 5'-TCAAATTC-3' sequence in the PTGS2/COX-2 promoter and activates its transcription. Implicated in transcriptional activation of CDKN1A; the function involves STAT3 and SRC. Involved in the transcription of rRNA genes by RNA Pol I and enhances protein synthesis and cell growth. This chain is Receptor tyrosine-protein kinase erbB-2 (ERBB2), found in Mesocricetus auratus (Golden hamster).